We begin with the raw amino-acid sequence, 341 residues long: Methionine import ATP-binding protein MetN 2 (341 aa).

An ABC transporter domain is found at 2 to 241 (IELKEVVKEY…PQHAVTKRFV (240 aa)). 38–45 (GFSGAGKS) is a binding site for ATP.

It belongs to the ABC transporter superfamily. Methionine importer (TC 3.A.1.24) family. The complex is composed of two ATP-binding proteins (MetN), two transmembrane proteins (MetI) and a solute-binding protein (MetQ).

Its subcellular location is the cell membrane. The catalysed reaction is L-methionine(out) + ATP + H2O = L-methionine(in) + ADP + phosphate + H(+). It catalyses the reaction D-methionine(out) + ATP + H2O = D-methionine(in) + ADP + phosphate + H(+). Functionally, part of the ABC transporter complex MetNIQ involved in methionine import. Responsible for energy coupling to the transport system. The chain is Methionine import ATP-binding protein MetN 2 from Staphylococcus aureus (strain MRSA252).